Reading from the N-terminus, the 364-residue chain is Photoreceptor outer segment membrane glycoprotein 2 (364 aa).

At 1–24 (MTVLKVKFTKTKRDKLAQILWILN) the chain is on the cytoplasmic side. A helical transmembrane segment spans residues 25-43 (WVSVVSGIILFSLGLFLKI). Over 44–61 (EIKKRNEVMAKGDINSVP) the chain is Lumenal. Residues 62–80 (NMLISVGVIACVVNFLGGK) traverse the membrane as a helical segment. Residues 81 to 99 (ICYDCSDANKFSRWKLIML) lie on the Cytoplasmic side of the membrane. Residues 100–123 (PYIICTFCFTFCILLGALMCYTMR) form a helical membrane-spanning segment. Over 124–264 (NELEESLYLG…LEYYTAIMRS (141 aa)) the chain is Lumenal. N-linked (GlcNAc...) asparagine glycosylation is present at asparagine 229. Residues 265–290 (IGIAALLIWLFELSVLIGVRYLQTAM) form a helical membrane-spanning segment. Over 291–364 (KNVLLQGDLQ…VTAKSIPAAS (74 aa)) the chain is Cytoplasmic.

This sequence belongs to the PRPH2/ROM1 family.

The protein localises to the membrane. The polypeptide is Photoreceptor outer segment membrane glycoprotein 2 (Gallus gallus (Chicken)).